Here is a 90-residue protein sequence, read N- to C-terminus: Cell division topological specificity factor (90 aa).

This sequence belongs to the MinE family.

In terms of biological role, prevents the cell division inhibition by proteins MinC and MinD at internal division sites while permitting inhibition at polar sites. This ensures cell division at the proper site by restricting the formation of a division septum at the midpoint of the long axis of the cell. The protein is Cell division topological specificity factor of Clostridium perfringens (strain ATCC 13124 / DSM 756 / JCM 1290 / NCIMB 6125 / NCTC 8237 / Type A).